An 853-amino-acid chain; its full sequence is DNA topoisomerase 1 (853 aa).

The region spanning 3–136 (KSLVIVESPV…KFRRVVFNEI (134 aa)) is the Toprim domain. Mg(2+)-binding residues include Glu-9 and Asp-105. Residues 152-565 (NMNRVYSQQA…SFFDNFSQQL (414 aa)) form the Topo IA-type catalytic domain. The interval 186-191 (SAGRVQ) is interaction with DNA. The active-site O-(5'-phospho-DNA)-tyrosine intermediate is Tyr-313. C4-type zinc fingers lie at residues 589-621 (CSLCNKKMGIKTAVTGVFLSCLGYNSEPNEKRC), 649-676 (CKKCNLVMDVYLINENLKIFICINNPSC), and 699-724 (CEKCKNDMLFKTGRFGNFFMCINDTC).

It belongs to the type IA topoisomerase family. Monomer. It depends on Mg(2+) as a cofactor.

The enzyme catalyses ATP-independent breakage of single-stranded DNA, followed by passage and rejoining.. Releases the supercoiling and torsional tension of DNA, which is introduced during the DNA replication and transcription, by transiently cleaving and rejoining one strand of the DNA duplex. Introduces a single-strand break via transesterification at a target site in duplex DNA. The scissile phosphodiester is attacked by the catalytic tyrosine of the enzyme, resulting in the formation of a DNA-(5'-phosphotyrosyl)-enzyme intermediate and the expulsion of a 3'-OH DNA strand. The free DNA strand then undergoes passage around the unbroken strand, thus removing DNA supercoils. Finally, in the religation step, the DNA 3'-OH attacks the covalent intermediate to expel the active-site tyrosine and restore the DNA phosphodiester backbone. The protein is DNA topoisomerase 1 of Buchnera aphidicola subsp. Schizaphis graminum (strain Sg).